The sequence spans 438 residues: Enolase (438 aa).

Substrate-binding residues include His-159 and Glu-168. Residue Glu-211 is the Proton donor of the active site. Asp-246, Glu-297, and Asp-322 together coordinate Mg(2+). The substrate site is built by Glu-297 and Asp-322. Lys-347 serves as the catalytic Proton acceptor. Residues Ser-374–Ser-377 and Lys-398 each bind substrate.

The protein belongs to the enolase family. In terms of assembly, homodimer. Mg(2+) serves as cofactor.

Its subcellular location is the cytoplasm. It catalyses the reaction (2R)-2-phosphoglycerate = phosphoenolpyruvate + H2O. The protein operates within carbohydrate degradation; glycolysis; pyruvate from D-glyceraldehyde 3-phosphate: step 4/5. The polypeptide is Enolase (ENO1) (Cryphonectria parasitica (Chestnut blight fungus)).